The sequence spans 118 residues: DNA-binding protein M164_1799 (118 aa).

Belongs to the PDCD5 family.

This Saccharolobus islandicus (strain M.16.4 / Kamchatka #3) (Sulfolobus islandicus) protein is DNA-binding protein M164_1799.